Here is a 473-residue protein sequence, read N- to C-terminus: MSENFKVLIIGGSVAGLTLALCLEKLDISYEILEQGEDISPQVGASIGIMPNGSPVLDQLGVFDDVERVIEPLEFARIRYPDGFFFQSQYPAIIADHFGYPISFLERQKFLQILYSKIRYKERVHTGQKAVRIESHESHVVVRTADKQYSGHLVVGADGVHSIVRSEIWRLSEPGAITDEEKTALRVEYACVYGISSGVRGVTDGVQLSLLDHGVTIHVFNGKAGKVFWFVIIKIDKRYSYTDMPRFSTQDAREICESLKSKLLDTSVSFGDLWAKCDIFMMTPLEEGHFQTWHRGRLVCVGDAVRKLTPNIGQGANMAIEDIAVLANALFRANVRDGLPDDRQIDDVLSQLSATRLPATKTTCKQSEFLTRLQAGDGIWRRLAARYIFPALHDIPAASSARVLKGGQRLDFVDPPQRARPELDRWAWVKDLRGYVPRPHVLYLICGALLAWWASGLVWHFPSKLDTTILSHV.

An N-terminal signal peptide occupies residues 1–22; the sequence is MSENFKVLIIGGSVAGLTLALC. Positions 34, 48, 107, 303, and 316 each coordinate FAD. Residues 441-461 traverse the membrane as a helical segment; sequence VLYLICGALLAWWASGLVWHF.

The protein belongs to the paxM FAD-dependent monooxygenase family. Requires FAD as cofactor.

The protein resides in the membrane. It functions in the pathway secondary metabolite biosynthesis. FAD-dependent monooxygeanse; part of the gene cluster that mediates the biosynthesis of terpendoles, indole-diterpene (IDT) mycotoxins including terpendole I, terpendole K, terpendole C, as well as the kinesin Eg5 inhibitor terpendole E. Terpendoles biosynthesis begins with the synthesis of geranylgeranyl diphosphate (GGPP) by a yet unidentified GGPP synthase. Condensation of indole-3-glycerol phosphate with GGPP by the prenyltransferase terC then forms 3-geranylgeranylindole (3-GGI), followed by epoxidation and cyclization of this intermediate (by the FAD-dependent monooxygeanse terM and the terpene cyclase terB) to form paspaline. The cytochrome monooxygenase terQ then hydroxylates paspalline at C-11 to yield terpendole E. The cytochrome monooxygenase terP converts terpendole E to 13-desoxyterpendole I, and terQ converts 13-desoxyterpendole I into terpendole I. TerF and terK are required for conversion of terpendole I to terpendole C which is further converted to terpendole K. In Tolypocladium album (Soil fungus), this protein is FAD-dependent monooxygeanse terM.